The following is a 658-amino-acid chain: uncharacterized protein (658 aa).

A compositionally biased stretch (low complexity) spans 516-639 (SSNNSNSSNN…NNNNNSSQGG (124 aa)). The disordered stretch occupies residues 516 to 646 (SSNNSNSSNN…QGGNSQGGSG (131 aa)).

Its subcellular location is the cytoplasm. This is an uncharacterized protein from Schizosaccharomyces pombe (strain 972 / ATCC 24843) (Fission yeast).